Reading from the N-terminus, the 336-residue chain is Cell division protein ZipA (336 aa).

Residues 1-6 are Periplasmic-facing; that stretch reads MMQDLR. The helical transmembrane segment at 7–27 threads the bilayer; that stretch reads LILIVVGAIAIIALLLHGLWT. At 28–336 the chain is on the cytoplasmic side; it reads SRKERSSLFR…RIRDVLKANA (309 aa). A compositionally biased stretch (basic and acidic residues) spans 40-51; sequence PVKRAKKARDET. Residues 40-190 are disordered; the sequence is PVKRAKKARD…APAQPQQPAE (151 aa). A compositionally biased stretch (low complexity) spans 76 to 89; the sequence is SFSSSSFDNASFDN. The span at 126-138 shows a compositional bias: polar residues; that stretch reads PRSQVRGDSNPQV. Low complexity predominate over residues 179-190; the sequence is QPAPAQPQQPAE.

It belongs to the ZipA family. In terms of assembly, interacts with FtsZ via their C-terminal domains.

The protein localises to the cell inner membrane. In terms of biological role, essential cell division protein that stabilizes the FtsZ protofilaments by cross-linking them and that serves as a cytoplasmic membrane anchor for the Z ring. Also required for the recruitment to the septal ring of downstream cell division proteins. The polypeptide is Cell division protein ZipA (Pectobacterium carotovorum subsp. carotovorum (strain PC1)).